The chain runs to 192 residues: MKELFLIIGAPGSGKTTDASLIAQADATNITHYSTGDLLRAQVASGSELGKTIDSFISKGNLVPLDVVVNTIVCALKAAPTKTIIIDGYPRSVEQMMEFDKVLSEQNEICLKGVIEVRVSEEVAKKRVLGRNRGADDNEEVFYNRMKVYTEPLNEILDFYQKKKLHFIIDGERTIEPIVADMKELIKKIQSI.

12–17 is a binding site for ATP; it reads GSGKTT. The segment at 34–63 is NMP; that stretch reads STGDLLRAQVASGSELGKTIDSFISKGNLV. AMP-binding positions include Thr35, Arg40, 61-63, 88-91, and Gln95; these read NLV and GYPR. Residues 130-136 are LID; sequence GRNRGAD. Arg131 serves as a coordination point for ATP. AMP contacts are provided by Arg133 and Arg145. Arg173 provides a ligand contact to ATP.

This sequence belongs to the adenylate kinase family. In terms of assembly, monomer.

It localises to the cytoplasm. The enzyme catalyses AMP + ATP = 2 ADP. It participates in purine metabolism; AMP biosynthesis via salvage pathway; AMP from ADP: step 1/1. Its function is as follows. Catalyzes the reversible transfer of the terminal phosphate group between ATP and AMP. Plays an important role in cellular energy homeostasis and in adenine nucleotide metabolism. In Campylobacter jejuni subsp. doylei (strain ATCC BAA-1458 / RM4099 / 269.97), this protein is Adenylate kinase.